Here is a 349-residue protein sequence, read N- to C-terminus: Anthranilate phosphoribosyltransferase (349 aa).

Residues G82, 85-86, 92-95, 110-118, and S122 contribute to the 5-phospho-alpha-D-ribose 1-diphosphate site; these read GD, NVST, and KHGNRAVSG. G82 lines the anthranilate pocket. S94 is a binding site for Mg(2+). N113 serves as a coordination point for anthranilate. R168 is a binding site for anthranilate. Residues D227 and E228 each coordinate Mg(2+).

It belongs to the anthranilate phosphoribosyltransferase family. In terms of assembly, homodimer. Mg(2+) serves as cofactor.

The enzyme catalyses N-(5-phospho-beta-D-ribosyl)anthranilate + diphosphate = 5-phospho-alpha-D-ribose 1-diphosphate + anthranilate. It participates in amino-acid biosynthesis; L-tryptophan biosynthesis; L-tryptophan from chorismate: step 2/5. Functionally, catalyzes the transfer of the phosphoribosyl group of 5-phosphorylribose-1-pyrophosphate (PRPP) to anthranilate to yield N-(5'-phosphoribosyl)-anthranilate (PRA). This Pseudomonas fluorescens (strain Pf0-1) protein is Anthranilate phosphoribosyltransferase.